A 1153-amino-acid chain; its full sequence is Cingulin (1153 aa).

The tract at residues 1–342 (MAEPRGPVDH…LVMTTGSAKV (342 aa)) is head. The disordered stretch occupies residues 17 to 37 (ITEPAGDAQMRTGRRPAKDAR). The ZIM signature appears at 38–52 (ANTYGVAVRVQGIAG). The interaction with TJP1/ZO1 stretch occupies residues 44–57 (AVRVQGIAGQPFVV). Phosphoserine is present on residues serine 86, serine 126, serine 128, serine 131, serine 146, serine 205, serine 208, and serine 324. Disordered stretches follow at residues 131-151 (SLLG…LELG) and 177-253 (DRHQ…SRAR). Over residues 207-220 (DSRHLRDPPEDRRS) the composition is skewed to basic and acidic residues. Residues 343–1110 (LAGQGELAQK…ALEKDSWRKA (768 aa)) adopt a coiled-coil conformation. Lysine 562 is modified (N6-acetyllysine). Disordered stretches follow at residues 755-796 (AQRG…QKRL), 823-861 (QSQL…LSRL), and 1110-1131 (AARS…EEFD). Composition is skewed to basic and acidic residues over residues 772–796 (ALEE…QKRL) and 827–853 (EDYK…EAEK). Residues 1111-1153 (ARSAAESSLQQEGLSSDEEFDGVYNPNSIASLLTESGLQTSSC) form a tail region. The segment covering 1115–1124 (AESSLQQEGL) has biased composition (polar residues). 2 positions are modified to phosphoserine: serine 1125 and serine 1126.

Belongs to the cingulin family. As to quaternary structure, homodimer. Interacts with TJP1/ZO1 and SPEF1.

The protein resides in the cell junction. The protein localises to the tight junction. Functionally, probably plays a role in the formation and regulation of the tight junction (TJ) paracellular permeability barrier. The sequence is that of Cingulin from Sorex araneus (Eurasian common shrew).